We begin with the raw amino-acid sequence, 709 residues long: Polyribonucleotide nucleotidyltransferase (709 aa).

Mg(2+)-binding residues include aspartate 486 and aspartate 492. The region spanning 553 to 612 is the KH domain; it reads PRIHTIKINPDKIKDVIGKGGSVIRALTEETGTTIEIEDDGTVKIAATDGEKAKHAISRI. Positions 622-690 constitute an S1 motif domain; the sequence is GRIYAGKVTR…RQGRVRLSIK (69 aa).

The protein belongs to the polyribonucleotide nucleotidyltransferase family. In terms of assembly, component of the RNA degradosome, which is a multiprotein complex involved in RNA processing and mRNA degradation. Requires Mg(2+) as cofactor.

The protein resides in the cytoplasm. The enzyme catalyses RNA(n+1) + phosphate = RNA(n) + a ribonucleoside 5'-diphosphate. Functionally, involved in mRNA degradation. Catalyzes the phosphorolysis of single-stranded polyribonucleotides processively in the 3'- to 5'-direction. The protein is Polyribonucleotide nucleotidyltransferase of Photorhabdus luminescens (Xenorhabdus luminescens).